A 449-amino-acid chain; its full sequence is Galactosyl transferase CpsE (449 aa).

Helical transmembrane passes span 5–22 (VVVY…TPNF), 27–46 (DLLF…DFYR), 59–78 (MVLK…FFIF), 88–107 (SFFT…NSFL), and 258–280 (FLDI…FLVP).

This sequence belongs to the bacterial sugar transferase family.

Its subcellular location is the cell membrane. In terms of biological role, galactosyl transferase is essential for the assembly of the group B streptococci (GBS) type III capsular polysaccharide. May be involved in the formation of either or both galactosidic bonds by catalyzing the addition of galactose to an oligosaccharide precursor or to a lipid intermediate. Type III capsular polysaccharide consists of a linear backbone with short side chains ending in residues of N-acetylneuraminic acid or sialic acid. The presence of sialic acid on the surface of the organism inhibits activation of the alternative pathway of complement and is thought to be an important element in the virulence function of the capsule. This chain is Galactosyl transferase CpsE (cpsE), found in Streptococcus agalactiae serotype III (strain NEM316).